The primary structure comprises 61 residues: Alpha-conotoxin PnIB (61 aa).

Positions 1–21 (MGMRMMFTVFLLVVLATTVVS) are cleaved as a signal peptide. The propeptide occupies 22–44 (FTSDRASDDGNAAASDLIALTIK). 2 disulfides stabilise this stretch: C46-C52 and C47-C60. A ser-Xaa-Pro motif, crucial for potent interaction with nAChR region spans residues 48 to 50 (SLP). Y59 is subject to Sulfotyrosine. Cysteine amide is present on C60.

Belongs to the conotoxin A superfamily. As to expression, expressed by the venom duct.

It localises to the secreted. Its function is as follows. Alpha-conotoxins act on postsynaptic membranes, they bind to the nicotinic acetylcholine receptors (nAChR) and thus inhibit them. This toxin blocks mammalian nAChRs (alpha-7/CHRNA7 &gt; alpha-3-beta-2/CHRNA3-CHRNB2). The sequence is that of Alpha-conotoxin PnIB from Conus pennaceus (Feathered cone).